We begin with the raw amino-acid sequence, 300 residues long: Secreted mono- and diacylglycerol lipase LIP4 (300 aa).

The signal sequence occupies residues 1–16; that stretch reads MRFLAFLLCLVPLALC. A disulfide bond links Cys-54 and Cys-293. The Nucleophile role is filled by Ser-167. Asp-224 is an active-site residue.

Belongs to the AB hydrolase superfamily. Lipase family. Class 3 subfamily.

The protein resides in the secreted. The catalysed reaction is a monoacylglycerol + H2O = glycerol + a fatty acid + H(+). The enzyme catalyses a diacylglycerol + H2O = a monoacylglycerol + a fatty acid + H(+). Functionally, secreted lipase involved in Dandruff and seborrheic dermatitis (D/SD) probably via lipase-mediated breakdown of sebaceous lipids and release of irritating free fatty acids. Shows activity against monoglyceride and diglyceride substrates. Due to an absence of fatty acid synthase genes in Malassezia species, secretory lipases are essential for the yeast to generate free fatty acids from degradation of sebum and assimilate them as lipid sources for growth. Plays an essential role at the pathogen-host interface during disease progression. This is Secreted mono- and diacylglycerol lipase LIP4 from Malassezia restricta (Seborrheic dermatitis infection agent).